The primary structure comprises 164 residues: Ubiquitin-fold modifier-conjugating enzyme 1 (164 aa).

The active-site Glycyl thioester intermediate is the Cys116.

It belongs to the ubiquitin-conjugating enzyme family. UFC1 subfamily.

Functionally, E2-like enzyme which forms an intermediate with UFM1 via a thioester linkage. The polypeptide is Ubiquitin-fold modifier-conjugating enzyme 1 (Drosophila persimilis (Fruit fly)).